Reading from the N-terminus, the 154-residue chain is UPF0178 protein GDI0551/Gdia_1457 (154 aa).

Belongs to the UPF0178 family.

This Gluconacetobacter diazotrophicus (strain ATCC 49037 / DSM 5601 / CCUG 37298 / CIP 103539 / LMG 7603 / PAl5) protein is UPF0178 protein GDI0551/Gdia_1457.